The sequence spans 385 residues: 28S rRNA (uridine-N(3))-methyltransferase (385 aa).

Disordered stretches follow at residues 1–35 (MAER…KKKW) and 47–72 (QRAQ…NQGR). Basic and acidic residues-rich tracts occupy residues 15-35 (HGQR…KKKW) and 47-58 (QRAQEEEAKRQE). The S-adenosyl-L-methionine site is built by arginine 293, glycine 313, asparagine 342, and threonine 343.

The protein belongs to the class IV-like SAM-binding methyltransferase superfamily. Interacts with INCA1.

Its subcellular location is the cytoplasm. The protein resides in the cytoskeleton. It is found in the spindle. It localises to the chromosome. The protein localises to the centromere. Its subcellular location is the kinetochore. The protein resides in the microtubule organizing center. It is found in the centrosome. The enzyme catalyses uridine in 28S rRNA + S-adenosyl-L-methionine = N(3)-methyluridine in 28S rRNA + S-adenosyl-L-homocysteine + H(+). S-adenosyl-L-methionine-dependent methyltransferase that specifically methylates the N3 position of a uridine in 28S rRNA. Required for association of the centrosomes with the poles of the bipolar mitotic spindle during metaphase. Also involved in chromosome alignment. May promote centrosome maturation probably by recruiting A-kinase anchor protein AKAP9 to centrosomes in early mitosis. Binds specifically to miRNA MIR145 hairpin, regulates MIR145 expression at a postranscriptional level. The chain is 28S rRNA (uridine-N(3))-methyltransferase from Mus musculus (Mouse).